The following is a 254-amino-acid chain: MNRRRRIYEGKAKILYEGPEPGTLIQFFKDDATAFNKKKHDVIDGKGVLNNRISEYIFTHLNKIGIPTHFIRRLNMREQLIKEVEIIPLEIVVRNVAAGSLAKRLGIEEGTVLPRSIIEFYYKADALDDPMVSEEHITAFGWASPQELDDIMALAIRINDFLSGLFLGVGIQLVDFKIECGRLYEGDMMRIILADEISPDSCRLWDVETKEKMDKDRFRRDMGGLVEAYQEVARRLGIINENEPPRGSGPVLVK.

It belongs to the SAICAR synthetase family.

It carries out the reaction 5-amino-1-(5-phospho-D-ribosyl)imidazole-4-carboxylate + L-aspartate + ATP = (2S)-2-[5-amino-1-(5-phospho-beta-D-ribosyl)imidazole-4-carboxamido]succinate + ADP + phosphate + 2 H(+). It participates in purine metabolism; IMP biosynthesis via de novo pathway; 5-amino-1-(5-phospho-D-ribosyl)imidazole-4-carboxamide from 5-amino-1-(5-phospho-D-ribosyl)imidazole-4-carboxylate: step 1/2. This is Phosphoribosylaminoimidazole-succinocarboxamide synthase from Sinorhizobium fredii (strain NBRC 101917 / NGR234).